A 514-amino-acid chain; its full sequence is MYQKLALISAFLATARAQSACTLQAETHPPLTWQKCSSGGTCTQQTGSVVIDANWRWTHATNSSTNCYDGNTWSSTLCPDNETCAKNCCLDGAAYASTYGVTTSADSLSIGFVTQSAQKNVGARLYLMASDTTYQEFTLLGNEFSFDVDVSQLPCGLNGALYFVSMDADGGVSKYPTNTAGAKYGTGYCDSQCPRDLKFINGQANVEGWEPSSNNANTGIGGHGSCCSEMDIWEANSISEALTPHPCTTVGQEICDGDSCGGTYSGDRYGGTCDPDGCDWNPYRLGNTSFYGPGSSFTLDTTKKLTVVTQFETSGAINRYYVQNGVTFQQPNAELGDYSGNSLDDDYCAAEEAEFGGSSFSDKGGLTQFKKATSGGMVLVMSLWDDYYANMLWLDSTYPTNETSSTPGAVRGSCSTSSGVPAQLESNSPNAKVVYSNIKFGPIGSTGNSSGGNPPGGNPPGTTTTRRPATSTGSSPGPTQTHYGQCGGIGYSGPTVCASGSTCQVLNPYYSQCL.

Positions 1-17 (MYQKLALISAFLATARA) are cleaved as a signal peptide. The tract at residues 18–453 (QSACTLQAET…GSTGNSSGGN (436 aa)) is catalytic. Cystine bridges form between Cys21/Cys89, Cys36/Cys42, Cys67/Cys88, Cys78/Cys84, Cys155/Cys414, Cys189/Cys227, Cys193/Cys226, Cys247/Cys273, Cys255/Cys260, and Cys278/Cys348. 2 N-linked (GlcNAc...) asparagine glycosylation sites follow: Asn62 and Asn81. The Nucleophile role is filled by Glu229. Residue Glu234 is the Proton donor of the active site. Asn287 carries N-linked (GlcNAc...) asparagine glycosylation. Disordered regions lie at residues 401–427 (NETSSTPGAVRGSCSTSSGVPAQLESN) and 444–481 (GSTGNSSGGNPPGGNPPGTTTTRRPATSTGSSPGPTQT). The linker stretch occupies residues 454-478 (PPGGNPPGTTTTRRPATSTGSSPGP). Over residues 460–479 (PGTTTTRRPATSTGSSPGPT) the composition is skewed to low complexity. The CBM1 domain occupies 478 to 514 (PTQTHYGQCGGIGYSGPTVCASGSTCQVLNPYYSQCL). Cystine bridges form between Cys486–Cys503 and Cys497–Cys513.

The protein belongs to the glycosyl hydrolase 7 (cellulase C) family.

The enzyme catalyses Hydrolysis of (1-&gt;4)-beta-D-glucosidic linkages in cellulose and cellotetraose, releasing cellobiose from the non-reducing ends of the chains.. The biological conversion of cellulose to glucose generally requires three types of hydrolytic enzymes: (1) Endoglucanases which cut internal beta-1,4-glucosidic bonds; (2) Exocellobiohydrolases that cut the disaccharide cellobiose from the non-reducing end of the cellulose polymer chain; (3) Beta-1,4-glucosidases which hydrolyze the cellobiose and other short cello-oligosaccharides to glucose. The chain is Exoglucanase 1 (cbh1) from Hypocrea rufa (Trichoderma viride).